The sequence spans 1028 residues: Beta-galactosidase (1028 aa).

Substrate-binding residues include Asn104 and Asp203. Asp203 contributes to the Na(+) binding site. Residues Glu418, His420, and Glu463 each contribute to the Mg(2+) site. Substrate contacts are provided by residues Glu463 and 539 to 542 (EYAH). The active-site Proton donor is Glu463. Glu539 acts as the Nucleophile in catalysis. Asn599 is a binding site for Mg(2+). The Na(+) site is built by Phe603 and Asn606. Residues Asn606 and Trp1003 each contribute to the substrate site.

The protein belongs to the glycosyl hydrolase 2 family. In terms of assembly, homotetramer. Mg(2+) serves as cofactor. The cofactor is Na(+).

The enzyme catalyses Hydrolysis of terminal non-reducing beta-D-galactose residues in beta-D-galactosides.. The sequence is that of Beta-galactosidase from Enterobacter cloacae.